Consider the following 203-residue polypeptide: Chromophore lyase CpcT/CpeT 3 (203 aa).

Belongs to the CpcT/CpeT biliprotein lyase family.

Functionally, covalently attaches a chromophore to Cys residue(s) of phycobiliproteins. The polypeptide is Chromophore lyase CpcT/CpeT 3 (Gloeobacter violaceus (strain ATCC 29082 / PCC 7421)).